The sequence spans 127 residues: Small ribosomal subunit protein uS11 (127 aa).

This sequence belongs to the universal ribosomal protein uS11 family. As to quaternary structure, part of the 30S ribosomal subunit.

Functionally, located on the platform of the 30S subunit. This is Small ribosomal subunit protein uS11 from Halobacterium salinarum (strain ATCC 700922 / JCM 11081 / NRC-1) (Halobacterium halobium).